The chain runs to 375 residues: Circadian-associated transcriptional repressor (375 aa).

A compositionally biased stretch (low complexity) spans 1 to 32 (MDSPSSVSSYSSSSLSPSFSTSSVNSDFSFPS). Disordered regions lie at residues 1-102 (MDSP…LNTQ), 192-218 (KSSSGGSRHQISKHFPSHHGDPGAASP), and 351-375 (DREMTKGHPEPQMTSHPPVAPDPQP). Over residues 33 to 46 (DNEREGKGTHELRP) the composition is skewed to basic and acidic residues.

In terms of assembly, interacts with BMAL1, PER2, CRY2, BHLHE41, HDAC1 NR3C1.

Its subcellular location is the nucleus. The protein localises to the PML body. Transcriptional repressor which forms a negative regulatory component of the circadian clock and acts independently of the circadian transcriptional repressors: CRY1, CRY2 and BHLHE41. In a histone deacetylase-dependent manner represses the transcriptional activator activity of the CLOCK-BMAL1 heterodimer. Abrogates the interaction of BMAL1 with the transcriptional coactivator CREBBP and can repress the histone acetyl-transferase activity of the CLOCK-BMAL1 heterodimer, reducing histone acetylation of its target genes. Rhythmically binds the E-box elements (5'-CACGTG-3') on circadian gene promoters and its occupancy shows circadian oscillation antiphasic to BMAL1. Interacts with the glucocorticoid receptor (NR3C1) and contributes to the repressive function in the glucocorticoid response. In Mus musculus (Mouse), this protein is Circadian-associated transcriptional repressor (Ciart).